The sequence spans 595 residues: Putative laccase-18 (595 aa).

The N-terminal stretch at 1–29 (MEKLSTAASLFGVVVAATALAMAVVGGEA) is a signal peptide. Plastocyanin-like domains are found at residues 37 to 153 (MVHE…PRDG) and 162 to 316 (KDVP…YTGA). N-linked (GlcNAc...) asparagine glycosylation is found at Asn42 and Asn48. The Cu cation site is built by His87 and His89. A glycan (N-linked (GlcNAc...) asparagine) is linked at Asn121. Residues His132 and His134 each coordinate Cu cation. Asn206, Asn345, Asn382, Asn402, Asn409, Asn439, and Asn470 each carry an N-linked (GlcNAc...) asparagine glycan. The 143-residue stretch at 429–571 (DFPVRPPRPF…ATAFIVEDGP (143 aa)) folds into the Plastocyanin-like 3 domain. Cu cation-binding residues include Asn488, His491, His493, His550, Cys551, His552, His556, and Met561. Residues 570–595 (GPTPETSLPPPPPEFKRCGTNGLSQP) form a disordered region.

Belongs to the multicopper oxidase family. Requires Cu cation as cofactor.

The protein resides in the secreted. It is found in the extracellular space. It localises to the apoplast. The enzyme catalyses 4 hydroquinone + O2 = 4 benzosemiquinone + 2 H2O. Its function is as follows. Lignin degradation and detoxification of lignin-derived products. The sequence is that of Putative laccase-18 (LAC18) from Oryza sativa subsp. indica (Rice).